A 146-amino-acid polypeptide reads, in one-letter code: Large ribosomal subunit protein uL11 (146 aa).

This sequence belongs to the universal ribosomal protein uL11 family. As to quaternary structure, part of the ribosomal stalk of the 50S ribosomal subunit. Interacts with L10 and the large rRNA to form the base of the stalk. L10 forms an elongated spine to which L12 dimers bind in a sequential fashion forming a multimeric L10(L12)X complex. In terms of processing, one or more lysine residues are methylated.

In terms of biological role, forms part of the ribosomal stalk which helps the ribosome interact with GTP-bound translation factors. This chain is Large ribosomal subunit protein uL11, found in Blochmanniella floridana.